The primary structure comprises 304 residues: 4-diphosphocytidyl-2-C-methyl-D-erythritol kinase (304 aa).

Residue K20 is part of the active site. An ATP-binding site is contributed by 106 to 116; it reads PVASGIGGGSG. Residue D148 is part of the active site.

This sequence belongs to the GHMP kinase family. IspE subfamily.

The enzyme catalyses 4-CDP-2-C-methyl-D-erythritol + ATP = 4-CDP-2-C-methyl-D-erythritol 2-phosphate + ADP + H(+). Its pathway is isoprenoid biosynthesis; isopentenyl diphosphate biosynthesis via DXP pathway; isopentenyl diphosphate from 1-deoxy-D-xylulose 5-phosphate: step 3/6. Functionally, catalyzes the phosphorylation of the position 2 hydroxy group of 4-diphosphocytidyl-2C-methyl-D-erythritol. The protein is 4-diphosphocytidyl-2-C-methyl-D-erythritol kinase of Bartonella bacilliformis (strain ATCC 35685 / KC583 / Herrer 020/F12,63).